Here is a 284-residue protein sequence, read N- to C-terminus: MAQLLDGKEISKVLKEEIKEEVKRWKEQGVNPKLAVVLVGDDPASVVYAKSKQKVSDSLGIDFELTVLPADSSEESILALIDSLNANPDVHGIMIELPLPKHISKERVMAAVRPDKDVDGVHPINRGYILSGEEGLFPATPESCIEIMLRSGVEIAGKHVVIVGRGETVGKPLVFLILKHNATVTICHSRTPDLGAFTRQADIIVAAVGKAKLVKKDMVKPGAIVVDAGINEIPGGICGDVDFEEVKEVASLISPVPGGVGSLTTALIMKNVLKGITLQRKEGQ.

Residues G164 to G166, S189, and I230 contribute to the NADP(+) site.

Belongs to the tetrahydrofolate dehydrogenase/cyclohydrolase family. As to quaternary structure, homodimer.

It carries out the reaction (6R)-5,10-methylene-5,6,7,8-tetrahydrofolate + NADP(+) = (6R)-5,10-methenyltetrahydrofolate + NADPH. The catalysed reaction is (6R)-5,10-methenyltetrahydrofolate + H2O = (6R)-10-formyltetrahydrofolate + H(+). It participates in one-carbon metabolism; tetrahydrofolate interconversion. Catalyzes the oxidation of 5,10-methylenetetrahydrofolate to 5,10-methenyltetrahydrofolate and then the hydrolysis of 5,10-methenyltetrahydrofolate to 10-formyltetrahydrofolate. The chain is Bifunctional protein FolD 2 from Desulfitobacterium hafniense (strain Y51).